Consider the following 449-residue polypeptide: Chromosomal replication initiator protein DnaA (449 aa).

The tract at residues 1–72 (MENIHDLWER…SETIDDLTGV (72 aa)) is domain I, interacts with DnaA modulators. The interval 72–111 (VRLYPKFVIPTSQLDEPFVEQELKKPMKQPPAQNGEMPNN) is domain II. The tract at residues 112–328 (MLNDKYTFDT…GALIRVVAYS (217 aa)) is domain III, AAA+ region. Positions 156, 158, 159, and 160 each coordinate ATP. The segment at 329–449 (SLINQDMNAD…IQDISDKLRS (121 aa)) is domain IV, binds dsDNA.

The protein belongs to the DnaA family. In terms of assembly, oligomerizes as a right-handed, spiral filament on DNA at oriC.

It is found in the cytoplasm. Plays an essential role in the initiation and regulation of chromosomal replication. ATP-DnaA binds to the origin of replication (oriC) to initiate formation of the DNA replication initiation complex once per cell cycle. Binds the DnaA box (a 9 base pair repeat at the origin) and separates the double-stranded (ds)DNA. Forms a right-handed helical filament on oriC DNA; dsDNA binds to the exterior of the filament while single-stranded (ss)DNA is stabiized in the filament's interior. The ATP-DnaA-oriC complex binds and stabilizes one strand of the AT-rich DNA unwinding element (DUE), permitting loading of DNA polymerase. After initiation quickly degrades to an ADP-DnaA complex that is not apt for DNA replication. Binds acidic phospholipids. In Halalkalibacterium halodurans (strain ATCC BAA-125 / DSM 18197 / FERM 7344 / JCM 9153 / C-125) (Bacillus halodurans), this protein is Chromosomal replication initiator protein DnaA.